The chain runs to 220 residues: Photosynthetic NDH subunit of lumenal location 3, chloroplastic (220 aa).

Residues 1-35 constitute a chloroplast transit peptide; the sequence is MAHFIDLNSLTNTLPSLPKLPESRKTGKSSGFACR. Residues 36 to 77 constitute a thylakoid transit peptide; that stretch reads RTEEFQEPDSVQITRRMTLGFAVSIGLTGILGENNVSLAQDN.

The protein belongs to the PsbQ family. As to quaternary structure, part of the chloroplast NDH complex, composed of a mixture of chloroplast and nucleus encoded subunits. Component of the NDH lumenal subcomplex, at least composed of PnsL1, PnsL2, PnsL3, PnsL4 and PnsL5.

Its subcellular location is the plastid. It is found in the chloroplast thylakoid membrane. Its function is as follows. NDH shuttles electrons from NAD(P)H:plastoquinone, via FMN and iron-sulfur (Fe-S) centers, to quinones in the photosynthetic chain and possibly in a chloroplast respiratory chain. The immediate electron acceptor for the enzyme in this species is believed to be plastoquinone. Couples the redox reaction to proton translocation, and thus conserves the redox energy in a proton gradient. Required for both formation and activity of the chloroplast NAD(P)H dehydrogenase (NDH) complex. The polypeptide is Photosynthetic NDH subunit of lumenal location 3, chloroplastic (Arabidopsis thaliana (Mouse-ear cress)).